The following is a 968-amino-acid chain: RNA polymerase-associated protein RapA (968 aa).

A Helicase ATP-binding domain is found at 164 to 334 (DVGRRHAPRV…FARLRLLDPN (171 aa)). 177–184 (DEVGLGKT) provides a ligand contact to ATP. The DEAH box signature appears at 280 to 283 (DEAH). Positions 490-662 (RVEWLMGYLT…YLASPDQTEG (173 aa)) constitute a Helicase C-terminal domain.

The protein belongs to the SNF2/RAD54 helicase family. RapA subfamily. Interacts with the RNAP. Has a higher affinity for the core RNAP than for the holoenzyme. Its ATPase activity is stimulated by binding to RNAP.

In terms of biological role, transcription regulator that activates transcription by stimulating RNA polymerase (RNAP) recycling in case of stress conditions such as supercoiled DNA or high salt concentrations. Probably acts by releasing the RNAP, when it is trapped or immobilized on tightly supercoiled DNA. Does not activate transcription on linear DNA. Probably not involved in DNA repair. This Shigella dysenteriae serotype 1 (strain Sd197) protein is RNA polymerase-associated protein RapA.